The primary structure comprises 159 residues: MADS-box transcription factor 23 (159 aa).

The MADS-box domain occupies 1–61 (MGRGKIEIKR…SRLYDFASSS (61 aa)). The K-box domain maps to 86-159 (AKLWQQEAAS…QELSRKVVTT (74 aa)).

In terms of tissue distribution, expressed in seedling roots and developing seeds.

The protein resides in the nucleus. Its function is as follows. Probable transcription factor. The chain is MADS-box transcription factor 23 (MADS23) from Oryza sativa subsp. japonica (Rice).